Consider the following 673-residue polypeptide: Methionine--tRNA ligase (673 aa).

The short motif at 15–25 (PYANGPIHLGH) is the 'HIGH' region element. Residues Cys-146, Cys-149, Cys-159, and Cys-162 each contribute to the Zn(2+) site. Positions 332 to 336 (KMSKS) match the 'KMSKS' region motif. Lys-335 lines the ATP pocket. A tRNA-binding domain is found at 572-673 (DFAKLDLRIA…EGAQPGMRVK (102 aa)).

This sequence belongs to the class-I aminoacyl-tRNA synthetase family. MetG type 1 subfamily. Homodimer. It depends on Zn(2+) as a cofactor.

Its subcellular location is the cytoplasm. It carries out the reaction tRNA(Met) + L-methionine + ATP = L-methionyl-tRNA(Met) + AMP + diphosphate. Is required not only for elongation of protein synthesis but also for the initiation of all mRNA translation through initiator tRNA(fMet) aminoacylation. The chain is Methionine--tRNA ligase from Shewanella loihica (strain ATCC BAA-1088 / PV-4).